The primary structure comprises 181 residues: Large ribosomal subunit protein bL17 (181 aa).

The segment covering 141–159 (KAASATAESAPVATANDAA) has biased composition (low complexity). The tract at residues 141-181 (KAASATAESAPVATANDAAPAEEAEVQGVKDPAEDCEAKAD) is disordered. The span at 171-181 (DPAEDCEAKAD) shows a compositional bias: basic and acidic residues.

Belongs to the bacterial ribosomal protein bL17 family. In terms of assembly, part of the 50S ribosomal subunit. Contacts protein L32.

In Geotalea daltonii (strain DSM 22248 / JCM 15807 / FRC-32) (Geobacter daltonii), this protein is Large ribosomal subunit protein bL17.